The following is a 283-amino-acid chain: NAD kinase (283 aa).

The active-site Proton acceptor is the Asp-65. NAD(+)-binding positions include 65 to 66, 139 to 140, Arg-150, Arg-167, Asp-169, 180 to 185, and Gln-239; these read DG, ND, and TGYSVS.

This sequence belongs to the NAD kinase family. The cofactor is a divalent metal cation.

It localises to the cytoplasm. It catalyses the reaction NAD(+) + ATP = ADP + NADP(+) + H(+). Functionally, involved in the regulation of the intracellular balance of NAD and NADP, and is a key enzyme in the biosynthesis of NADP. Catalyzes specifically the phosphorylation on 2'-hydroxyl of the adenosine moiety of NAD to yield NADP. The protein is NAD kinase of Nitratidesulfovibrio vulgaris (strain DSM 19637 / Miyazaki F) (Desulfovibrio vulgaris).